A 313-amino-acid chain; its full sequence is T-box protein 37 (313 aa).

A DNA-binding region (T-box) is located at residues 19–195 (IWEKFYPKTE…HNKFASGFRS (177 aa)). A disordered region spans residues 193–228 (FRSNGKRRLSSESENSENSPPKRSASAISSLTPPAI).

Its subcellular location is the nucleus. In terms of biological role, transcription factor. Required for mesodermal induction, acting redundantly with transcription factor tbx-38. Together with tbx-38, acts by inducing cell fates in the AB lineage, thereby playing a role in development of the anterior pharynx. This chain is T-box protein 37 (tbx-37), found in Caenorhabditis elegans.